The following is a 277-amino-acid chain: Protein PTST, chloroplastic (277 aa).

A chloroplast-targeting transit peptide spans 1-44 (MGCVPRIEFGCSSQSLTLSWNLRAWNLCRLNTISHFQKLPYPLV). Residues 95–152 (DTERSKLVKKLSEANQQNRFLKRQLKTQEHEITNIKTELALMELEVQALVKLAEEIAN) adopt a coiled-coil conformation.

Interacts with GBSS1.

It is found in the plastid. It localises to the chloroplast stroma. Its function is as follows. Involved in targeting GBSS1 to the starch granule. Was originally thought to be a carbohydrate-binding scaffold protein, but it has been shown that it is mainly found as a soluble protein and that interaction with GBSS1 is a pre-requisite for subsequent starch granule binding. Dissociation from starch as a function of pH, Mg(2+) concentration or redox state is not observed. Interacts primarily with amylopectin and is required for amylose synthesis. The polypeptide is Protein PTST, chloroplastic (Arabidopsis thaliana (Mouse-ear cress)).